The chain runs to 256 residues: Phosphatidylglycerol--prolipoprotein diacylglyceryl transferase (256 aa).

3 helical membrane passes run 19–39, 56–76, and 91–111; these read VHWYGLMYLIGFIGAWLLGYW, LIFYSALGVILGGRVGYMLFY, and IWEGGMSFHGGLLGVVIAAWL. R139 is an a 1,2-diacyl-sn-glycero-3-phospho-(1'-sn-glycerol) binding site. The helical transmembrane segment at 231–251 threads the bilayer; that stretch reads FGWLTMGQVLSIPMLLIGIWL.

This sequence belongs to the Lgt family.

It is found in the cell inner membrane. The catalysed reaction is L-cysteinyl-[prolipoprotein] + a 1,2-diacyl-sn-glycero-3-phospho-(1'-sn-glycerol) = an S-1,2-diacyl-sn-glyceryl-L-cysteinyl-[prolipoprotein] + sn-glycerol 1-phosphate + H(+). It participates in protein modification; lipoprotein biosynthesis (diacylglyceryl transfer). Its function is as follows. Catalyzes the transfer of the diacylglyceryl group from phosphatidylglycerol to the sulfhydryl group of the N-terminal cysteine of a prolipoprotein, the first step in the formation of mature lipoproteins. This Legionella pneumophila (strain Corby) protein is Phosphatidylglycerol--prolipoprotein diacylglyceryl transferase.